The primary structure comprises 256 residues: Alcohol dehydrogenase (256 aa).

An NAD(+)-binding site is contributed by 12-35; that stretch reads FVAGLGGIGLDTSKELVKRDLKNL. Position 140 (S140) interacts with substrate. Catalysis depends on Y153, which acts as the Proton acceptor.

This sequence belongs to the short-chain dehydrogenases/reductases (SDR) family. As to quaternary structure, homodimer.

The enzyme catalyses a primary alcohol + NAD(+) = an aldehyde + NADH + H(+). The catalysed reaction is a secondary alcohol + NAD(+) = a ketone + NADH + H(+). The polypeptide is Alcohol dehydrogenase (Adh) (Drosophila mauritiana (Fruit fly)).